We begin with the raw amino-acid sequence, 405 residues long: Eukaryotic initiation factor 4A (405 aa).

The Q motif signature appears at 32–60; sequence PTFESMGLREELLRGIFNYGFEKPSAIQQ. The Helicase ATP-binding domain occupies 63-233; the sequence is ILPIIKGRDT…EKFMTKPVRI (171 aa). 76 to 83 contacts ATP; sequence AQSGTGKT. The short motif at 181-184 is the DEAD box element; sequence DEAD. The region spanning 244-405 is the Helicase C-terminal domain; the sequence is GIKQFFVSVE…EMPVNFASII (162 aa).

Belongs to the DEAD box helicase family. eIF4A subfamily.

Its subcellular location is the cytoplasm. It catalyses the reaction ATP + H2O = ADP + phosphate + H(+). Its function is as follows. ATP-dependent RNA helicase which is a subunit of the eIF4F complex involved in cap recognition and is required for mRNA binding to ribosome. In the current model of translation initiation, eIF4A unwinds RNA secondary structures in the 5'-UTR of mRNAs which is necessary to allow efficient binding of the small ribosomal subunit, and subsequent scanning for the initiator codon. The protein is Eukaryotic initiation factor 4A (tifA) of Dictyostelium discoideum (Social amoeba).